Here is a 461-residue protein sequence, read N- to C-terminus: Cyclic AMP-responsive element-binding protein 3-like protein 3 (461 aa).

Over Met-1–Thr-322 the chain is Cytoplasmic. The interval Asp-51–Lys-120 is disordered. Residues Phe-63–Ser-85 are compositionally biased toward low complexity. Ser-173 is subject to Phosphoserine. The region spanning Val-243–Leu-306 is the bZIP domain. Positions Lys-245–Arg-274 are basic motif. The segment at Leu-285–Leu-306 is leucine-zipper. Lys-294 participates in a covalent cross-link: Glycyl lysine isopeptide (Lys-Gly) (interchain with G-Cter in ubiquitin). A helical; Signal-anchor for type II membrane protein membrane pass occupies residues Cys-323–Gly-343. The Lumenal portion of the chain corresponds to Pro-344–Leu-461. Positions Arg-370–Thr-408 are disordered. Ser-379 is a glycosylation site (O-linked (GalNAc...) serine). Basic and acidic residues predominate over residues Pro-386–Ser-395. N-linked (GlcNAc...) asparagine glycosylation is found at Asn-410, Asn-413, Asn-420, and Asn-427. The interval Ala-442–Leu-461 is disordered.

The protein belongs to the bZIP family. ATF subfamily. In terms of assembly, binds DNA as a dimer. May form homodimers. Interacts with ATF6. Interacts with SYNV1/HRD1; this interaction leads to CREB3L3 ubiquitination and proteasomal degradation. In terms of processing, controlled by regulated intramembrane proteolysis (RIP). Following ER stress a fragment containing the cytoplasmic transcription factor domain is released by proteolysis. The cleavage seems to be performed sequentially by site-1 and site-2 proteases (PS1 and PS2). Post-translationally, N- and O-glycosylated. N-glycosylation is required for optimal proteolytic activation. O-glycosylated with core 1 or possibly core 8 glycans. Ubiquitinated at Lys-294 by SYNV1/HRD1 via 'Lys-27'-linked ubiquitin. Exclusively expressed in liver. Underexpressed in hepatocellular carcinoma tissues.

It is found in the endoplasmic reticulum membrane. The protein localises to the nucleus. Its function is as follows. Transcription factor that may act during endoplasmic reticulum stress by activating unfolded protein response target genes. Activated in response to cAMP stimulation. In vitro, binds to the cAMP response element (CRE) and box-B element. Activates transcription through box-B element. Activates transcription through CRE. May function synergistically with ATF6. In acute inflammatory response, may activate expression of acute phase response (APR) genes. May be involved in growth suppression. Regulates FGF21 transcription. Plays a crucial role in the regulation of triglyceride metabolism and is required for the maintenance of normal plasma triglyceride concentrations. This Homo sapiens (Human) protein is Cyclic AMP-responsive element-binding protein 3-like protein 3 (CREB3L3).